A 175-amino-acid chain; its full sequence is Large ribosomal subunit protein uL6 (175 aa).

The protein belongs to the universal ribosomal protein uL6 family. In terms of assembly, part of the 50S ribosomal subunit.

In terms of biological role, this protein binds to the 23S rRNA, and is important in its secondary structure. It is located near the subunit interface in the base of the L7/L12 stalk, and near the tRNA binding site of the peptidyltransferase center. The sequence is that of Large ribosomal subunit protein uL6 from Xanthomonas campestris pv. campestris (strain 8004).